The sequence spans 346 residues: Holliday junction branch migration complex subunit RuvB (346 aa).

A large ATPase domain (RuvB-L) region spans residues 1–182; it reads MSEPARLISP…FGIPVRLSFY (182 aa). ATP contacts are provided by residues Leu21, Arg22, Gly63, Lys66, Thr67, Thr68, 129 to 131, Arg172, Tyr182, and Arg219; that span reads EDF. Thr67 serves as a coordination point for Mg(2+). Residues 183-253 form a small ATPAse domain (RuvB-S) region; the sequence is TVEELELIVR…IADEALTRLL (71 aa). The segment at 256–346 is head domain (RuvB-H); the sequence is NVGFDQLDKR…AQFRLFQEDN (91 aa). Arg292, Arg311, and Arg316 together coordinate DNA.

It belongs to the RuvB family. Homohexamer. Forms an RuvA(8)-RuvB(12)-Holliday junction (HJ) complex. HJ DNA is sandwiched between 2 RuvA tetramers; dsDNA enters through RuvA and exits via RuvB. An RuvB hexamer assembles on each DNA strand where it exits the tetramer. Each RuvB hexamer is contacted by two RuvA subunits (via domain III) on 2 adjacent RuvB subunits; this complex drives branch migration. In the full resolvosome a probable DNA-RuvA(4)-RuvB(12)-RuvC(2) complex forms which resolves the HJ.

Its subcellular location is the cytoplasm. The catalysed reaction is ATP + H2O = ADP + phosphate + H(+). In terms of biological role, the RuvA-RuvB-RuvC complex processes Holliday junction (HJ) DNA during genetic recombination and DNA repair, while the RuvA-RuvB complex plays an important role in the rescue of blocked DNA replication forks via replication fork reversal (RFR). RuvA specifically binds to HJ cruciform DNA, conferring on it an open structure. The RuvB hexamer acts as an ATP-dependent pump, pulling dsDNA into and through the RuvAB complex. RuvB forms 2 homohexamers on either side of HJ DNA bound by 1 or 2 RuvA tetramers; 4 subunits per hexamer contact DNA at a time. Coordinated motions by a converter formed by DNA-disengaged RuvB subunits stimulates ATP hydrolysis and nucleotide exchange. Immobilization of the converter enables RuvB to convert the ATP-contained energy into a lever motion, pulling 2 nucleotides of DNA out of the RuvA tetramer per ATP hydrolyzed, thus driving DNA branch migration. The RuvB motors rotate together with the DNA substrate, which together with the progressing nucleotide cycle form the mechanistic basis for DNA recombination by continuous HJ branch migration. Branch migration allows RuvC to scan DNA until it finds its consensus sequence, where it cleaves and resolves cruciform DNA. The sequence is that of Holliday junction branch migration complex subunit RuvB from Rhizobium johnstonii (strain DSM 114642 / LMG 32736 / 3841) (Rhizobium leguminosarum bv. viciae).